We begin with the raw amino-acid sequence, 188 residues long: MAIMSDKWIKEAVINQSMISPFAEKQVRVHNKEKIISYGLSSYGYDARVSNEFKIFTNINSTTVDPKNFSEYNLVDREVDVCIIPPNSFALGRTIEYFKIPRDVLVICVGKSTYARCGIIVNVTPLEPEWEGHVTLEFSNTTPLPAKIYANEGACQFLFLKSDQICDTSYADRQGKYMKQVGVTLPLT.

DCTP is bound by residues 111–116 (KSTYAR), 135–137 (TLE), Gln156, Tyr170, Lys179, and Gln180. Catalysis depends on Glu137, which acts as the Proton donor/acceptor.

This sequence belongs to the dCTP deaminase family. In terms of assembly, homotrimer.

It carries out the reaction dCTP + H2O + H(+) = dUTP + NH4(+). It participates in pyrimidine metabolism; dUMP biosynthesis; dUMP from dCTP (dUTP route): step 1/2. Functionally, catalyzes the deamination of dCTP to dUTP. This chain is dCTP deaminase, found in Rickettsia akari (strain Hartford).